The chain runs to 278 residues: 4-deoxy-L-threo-5-hexosulose-uronate ketol-isomerase (278 aa).

4 residues coordinate Zn(2+): His-196, His-198, Glu-203, and His-245.

This sequence belongs to the KduI family. Requires Zn(2+) as cofactor.

It carries out the reaction 5-dehydro-4-deoxy-D-glucuronate = 3-deoxy-D-glycero-2,5-hexodiulosonate. It functions in the pathway glycan metabolism; pectin degradation; 2-dehydro-3-deoxy-D-gluconate from pectin: step 4/5. Catalyzes the isomerization of 5-dehydro-4-deoxy-D-glucuronate to 3-deoxy-D-glycero-2,5-hexodiulosonate. This chain is 4-deoxy-L-threo-5-hexosulose-uronate ketol-isomerase, found in Pectobacterium carotovorum subsp. carotovorum (Erwinia carotovora subsp. carotovora).